The primary structure comprises 326 residues: Metallophosphoesterase domain-containing protein 1 (326 aa).

This sequence belongs to the UPF0046 family.

In terms of biological role, may have metallophosphoesterase activity (in vitro). This chain is Metallophosphoesterase domain-containing protein 1 (Mpped1), found in Mus musculus (Mouse).